Reading from the N-terminus, the 321-residue chain is Beta-1,3-N-acetylglucosaminyltransferase manic fringe (321 aa).

Residues M1–R7 lie on the Cytoplasmic side of the membrane. The chain crosses the membrane as a helical; Signal-anchor for type II membrane protein span at residues G8 to H27. Residues L28 to R321 are Lumenal-facing. Residue R70 participates in substrate binding. A glycan (N-linked (GlcNAc...) asparagine) is linked at N109. 2 cysteine pairs are disulfide-bonded: C110-C121 and C139-C202. Residue D143 participates in substrate binding. D144 contacts Mn(2+). N185 carries an N-linked (GlcNAc...) asparagine glycan. D232 is an active-site residue. H256 contributes to the Mn(2+) binding site. A disulfide bond links C306 and C315.

It belongs to the glycosyltransferase 31 family. Mn(2+) serves as cofactor.

The protein localises to the golgi apparatus membrane. The catalysed reaction is 3-O-(alpha-L-fucosyl)-L-threonyl-[EGF-like domain protein] + UDP-N-acetyl-alpha-D-glucosamine = 3-O-(N-acetyl-beta-D-glucosaminyl-(1-&gt;3)-alpha-L-fucosyl)-L-threonyl-[EGF-like domain protein] + UDP + H(+). The enzyme catalyses 3-O-(alpha-L-fucosyl)-L-seryl-[EGF-like domain protein] + UDP-N-acetyl-alpha-D-glucosamine = 3-O-(N-acetyl-beta-D-glucosaminyl-(1-&gt;3)-alpha-L-fucosyl)-L-seryl-[EGF-like domain protein] + UDP + H(+). Functionally, glycosyltransferase that initiates the elongation of O-linked fucose residues attached to EGF-like repeats in the extracellular domain of Notch molecules. Modulates NOTCH1 activity by modifying O-fucose residues at specific EGF-like domains resulting in inhibition of NOTCH1 activation by JAG1 and enhancement of NOTCH1 activation by DLL1 via an increase in its binding to DLL1. This chain is Beta-1,3-N-acetylglucosaminyltransferase manic fringe (MFNG), found in Pan troglodytes (Chimpanzee).